The sequence spans 90 residues: Probable Fe(2+)-trafficking protein (90 aa).

This sequence belongs to the Fe(2+)-trafficking protein family.

Could be a mediator in iron transactions between iron acquisition and iron-requiring processes, such as synthesis and/or repair of Fe-S clusters in biosynthetic enzymes. In Nitrosomonas europaea (strain ATCC 19718 / CIP 103999 / KCTC 2705 / NBRC 14298), this protein is Probable Fe(2+)-trafficking protein.